Consider the following 320-residue polypeptide: Methenyltetrahydromethanopterin cyclohydrolase (320 aa).

It belongs to the MCH family. In terms of assembly, homodimer.

The protein localises to the cytoplasm. It carries out the reaction 5,10-methenyl-5,6,7,8-tetrahydromethanopterin + H2O = N(5)-formyl-5,6,7,8-tetrahydromethanopterin + H(+). It functions in the pathway one-carbon metabolism; methanogenesis from CO(2); 5,10-methenyl-5,6,7,8-tetrahydromethanopterin from CO(2): step 3/3. Catalyzes the reversible interconversion of 5-formyl-H(4)MPT to methenyl-H(4)MPT(+). This Methanothermobacter marburgensis (strain ATCC BAA-927 / DSM 2133 / JCM 14651 / NBRC 100331 / OCM 82 / Marburg) (Methanobacterium thermoautotrophicum) protein is Methenyltetrahydromethanopterin cyclohydrolase (mch).